The following is a 285-amino-acid chain: Homeobox protein vex1 (285 aa).

Disordered regions lie at residues 30–54 (KSGN…LPSV) and 69–88 (NEER…APQE). Over residues 69–80 (NEERSPPVKDQL) the composition is skewed to basic and acidic residues. A DNA-binding region (homeobox) is located at residues 131–190 (AARARTKFSPEQLEELERSFKENRYIGSSEKRRLSKVLKLSETQIKTWFQNRRMKFKRQT).

As to expression, widely expressed in the embryo prior to gastrulation. Becomes restricted to the ventral marginal zone by mid/late gastrulation. Ventral localization persists during gastrulation and neurulation in the ventral region of the closed blastopore and in the proctodeum during tail bud stages.

It is found in the nucleus. Its function is as follows. Transcriptional repressor. Acts in a ventral signaling pathway downstream of bmp4 to antagonize the Spemann organizer and ventrally pattern the embryonic mesoderm. Represses transcription of the dorsal genes gsc and otx2. This is Homeobox protein vex1 from Xenopus laevis (African clawed frog).